The sequence spans 194 residues: uncharacterized protein (194 aa).

The protein to A.aeolicus AQ_423.

This is an uncharacterized protein from Aquifex aeolicus (strain VF5).